The chain runs to 1578 residues: Pentafunctional AROM polypeptide (1578 aa).

Residues 1-393 (MSVELAKVSI…YGTSAHVVSD (393 aa)) form a 3-dehydroquinate synthase region. Residues 44-46 (DTN), 79-82 (EAHK), 110-112 (GGV), and aspartate 115 each bind NAD(+). A 7-phospho-2-dehydro-3-deoxy-D-arabino-heptonate-binding site is contributed by arginine 126. Residue 135–136 (TS) coordinates NAD(+). 7-phospho-2-dehydro-3-deoxy-D-arabino-heptonate is bound by residues aspartate 142 and lysine 148. Lysine 157 lines the NAD(+) pocket. Residue asparagine 158 participates in 7-phospho-2-dehydro-3-deoxy-D-arabino-heptonate binding. Residues 175 to 178 (WLET) and asparagine 186 each bind NAD(+). Residue glutamate 190 coordinates Zn(2+). Residues 190–193 (EVIK) and lysine 259 contribute to the 7-phospho-2-dehydro-3-deoxy-D-arabino-heptonate site. Glutamate 269 serves as the catalytic Proton acceptor; for 3-dehydroquinate synthase activity. 7-phospho-2-dehydro-3-deoxy-D-arabino-heptonate contacts are provided by residues 273–277 (RNLLN) and histidine 280. Zn(2+) is bound at residue histidine 280. Histidine 284 acts as the Proton acceptor; for 3-dehydroquinate synthase activity in catalysis. 7-phospho-2-dehydro-3-deoxy-D-arabino-heptonate is bound by residues histidine 296 and lysine 365. Histidine 296 provides a ligand contact to Zn(2+). The tract at residues 406–863 (VHPFNNIPEG…WDVLHSQLGA (458 aa)) is EPSP synthase. Cysteine 845 (for EPSP synthase activity) is an active-site residue. Positions 882–1071 (VVIIGMRAAG…VPSRRSAFVC (190 aa)) are shikimate kinase. Residue 886–893 (GMRAAGKS) coordinates ATP. The 3-dehydroquinase stretch occupies residues 1072–1284 (LTFEDLSDHL…AAPGQLTLAE (213 aa)). The active-site Proton acceptor; for 3-dehydroquinate dehydratase activity is histidine 1189. The active-site Schiff-base intermediate with substrate; for 3-dehydroquinate dehydratase activity is lysine 1218. The tract at residues 1297 to 1578 (AKKFFVIGSP…KAIFDAVTQE (282 aa)) is shikimate dehydrogenase.

The protein in the N-terminal section; belongs to the sugar phosphate cyclases superfamily. Dehydroquinate synthase family. It in the 2nd section; belongs to the EPSP synthase family. In the 3rd section; belongs to the shikimate kinase family. This sequence in the 4th section; belongs to the type-I 3-dehydroquinase family. The protein in the C-terminal section; belongs to the shikimate dehydrogenase family. As to quaternary structure, homodimer. Requires Zn(2+) as cofactor.

Its subcellular location is the cytoplasm. It carries out the reaction 7-phospho-2-dehydro-3-deoxy-D-arabino-heptonate = 3-dehydroquinate + phosphate. It catalyses the reaction 3-dehydroquinate = 3-dehydroshikimate + H2O. The catalysed reaction is shikimate + NADP(+) = 3-dehydroshikimate + NADPH + H(+). The enzyme catalyses shikimate + ATP = 3-phosphoshikimate + ADP + H(+). It carries out the reaction 3-phosphoshikimate + phosphoenolpyruvate = 5-O-(1-carboxyvinyl)-3-phosphoshikimate + phosphate. The protein operates within metabolic intermediate biosynthesis; chorismate biosynthesis; chorismate from D-erythrose 4-phosphate and phosphoenolpyruvate: step 2/7. Its pathway is metabolic intermediate biosynthesis; chorismate biosynthesis; chorismate from D-erythrose 4-phosphate and phosphoenolpyruvate: step 3/7. It participates in metabolic intermediate biosynthesis; chorismate biosynthesis; chorismate from D-erythrose 4-phosphate and phosphoenolpyruvate: step 4/7. It functions in the pathway metabolic intermediate biosynthesis; chorismate biosynthesis; chorismate from D-erythrose 4-phosphate and phosphoenolpyruvate: step 5/7. The protein operates within metabolic intermediate biosynthesis; chorismate biosynthesis; chorismate from D-erythrose 4-phosphate and phosphoenolpyruvate: step 6/7. The AROM polypeptide catalyzes 5 consecutive enzymatic reactions in prechorismate polyaromatic amino acid biosynthesis. This is Pentafunctional AROM polypeptide from Kluyveromyces lactis (strain ATCC 8585 / CBS 2359 / DSM 70799 / NBRC 1267 / NRRL Y-1140 / WM37) (Yeast).